Consider the following 335-residue polypeptide: Holliday junction branch migration complex subunit RuvB (335 aa).

A large ATPase domain (RuvB-L) region spans residues 1 to 183 (MDERIISSET…FGVIDHLEFY (183 aa)). Residues L22, R23, G64, K67, T68, T69, 130–132 (EDY), R173, Y183, and R220 each bind ATP. T68 contributes to the Mg(2+) binding site. The small ATPAse domain (RuvB-S) stretch occupies residues 184 to 254 (TEEQLTEIVL…LAKEALTLLQ (71 aa)). A head domain (RuvB-H) region spans residues 257–335 (PRGLDTIDQK…HLGISYEKEV (79 aa)). DNA-binding residues include R293, R312, and R317.

It belongs to the RuvB family. Homohexamer. Forms an RuvA(8)-RuvB(12)-Holliday junction (HJ) complex. HJ DNA is sandwiched between 2 RuvA tetramers; dsDNA enters through RuvA and exits via RuvB. An RuvB hexamer assembles on each DNA strand where it exits the tetramer. Each RuvB hexamer is contacted by two RuvA subunits (via domain III) on 2 adjacent RuvB subunits; this complex drives branch migration. In the full resolvosome a probable DNA-RuvA(4)-RuvB(12)-RuvC(2) complex forms which resolves the HJ.

The protein resides in the cytoplasm. It carries out the reaction ATP + H2O = ADP + phosphate + H(+). The RuvA-RuvB-RuvC complex processes Holliday junction (HJ) DNA during genetic recombination and DNA repair, while the RuvA-RuvB complex plays an important role in the rescue of blocked DNA replication forks via replication fork reversal (RFR). RuvA specifically binds to HJ cruciform DNA, conferring on it an open structure. The RuvB hexamer acts as an ATP-dependent pump, pulling dsDNA into and through the RuvAB complex. RuvB forms 2 homohexamers on either side of HJ DNA bound by 1 or 2 RuvA tetramers; 4 subunits per hexamer contact DNA at a time. Coordinated motions by a converter formed by DNA-disengaged RuvB subunits stimulates ATP hydrolysis and nucleotide exchange. Immobilization of the converter enables RuvB to convert the ATP-contained energy into a lever motion, pulling 2 nucleotides of DNA out of the RuvA tetramer per ATP hydrolyzed, thus driving DNA branch migration. The RuvB motors rotate together with the DNA substrate, which together with the progressing nucleotide cycle form the mechanistic basis for DNA recombination by continuous HJ branch migration. Branch migration allows RuvC to scan DNA until it finds its consensus sequence, where it cleaves and resolves cruciform DNA. This Listeria innocua serovar 6a (strain ATCC BAA-680 / CLIP 11262) protein is Holliday junction branch migration complex subunit RuvB.